We begin with the raw amino-acid sequence, 171 residues long: Peptide deformylase (171 aa).

2 residues coordinate Fe cation: C91 and H133. E134 is a catalytic residue. A Fe cation-binding site is contributed by H137.

The protein belongs to the polypeptide deformylase family. Fe(2+) serves as cofactor.

It catalyses the reaction N-terminal N-formyl-L-methionyl-[peptide] + H2O = N-terminal L-methionyl-[peptide] + formate. Functionally, removes the formyl group from the N-terminal Met of newly synthesized proteins. Requires at least a dipeptide for an efficient rate of reaction. N-terminal L-methionine is a prerequisite for activity but the enzyme has broad specificity at other positions. This Edwardsiella ictaluri (strain 93-146) protein is Peptide deformylase.